The following is a 195-amino-acid chain: Putative NADH dehydrogenase/NAD(P)H nitroreductase Caul_0018 (195 aa).

Belongs to the nitroreductase family. HadB/RutE subfamily. It depends on FMN as a cofactor.

This is Putative NADH dehydrogenase/NAD(P)H nitroreductase Caul_0018 from Caulobacter sp. (strain K31).